Consider the following 1044-residue polypeptide: Probable pre-mRNA-splicing factor ATP-dependent RNA helicase DEAH6 (1044 aa).

Disordered regions lie at residues 99-134 (EADH…SEQL) and 152-211 (RRKV…VRRD). Over residues 157 to 167 (EDEDDGTESEE) the composition is skewed to acidic residues. A compositionally biased stretch (basic and acidic residues) spans 168 to 211 (ERLRDQREREELEQHLRERDTARTRKLTEPKMSKKEQEEFVRRD). The Helicase ATP-binding domain maps to 414–577 (LNAVKDHQVL…FDQAPIFRFP (164 aa)). 427 to 434 (GETGSGKT) provides a ligand contact to ATP. The short motif at 524–527 (DEAH) is the DEAH box element. Positions 599-775 (AITTVLTIHV…SVVLSLKSLG (177 aa)) constitute a Helicase C-terminal domain.

It belongs to the DEAD box helicase family. DEAH subfamily. PRP2 sub-subfamily. Predominantly expressed in flowers.

The enzyme catalyses ATP + H2O = ADP + phosphate + H(+). Functionally, may be involved in pre-mRNA splicing. The protein is Probable pre-mRNA-splicing factor ATP-dependent RNA helicase DEAH6 of Arabidopsis thaliana (Mouse-ear cress).